We begin with the raw amino-acid sequence, 223 residues long: Endonuclease V (223 aa).

Positions 35 and 103 each coordinate Mg(2+).

The protein belongs to the endonuclease V family. The cofactor is Mg(2+).

Its subcellular location is the cytoplasm. It catalyses the reaction Endonucleolytic cleavage at apurinic or apyrimidinic sites to products with a 5'-phosphate.. DNA repair enzyme involved in the repair of deaminated bases. Selectively cleaves double-stranded DNA at the second phosphodiester bond 3' to a deoxyinosine leaving behind the intact lesion on the nicked DNA. This is Endonuclease V from Cronobacter sakazakii (strain ATCC BAA-894) (Enterobacter sakazakii).